A 305-amino-acid polypeptide reads, in one-letter code: Cyclin-dependent kinase 3 (305 aa).

Positions 4–286 constitute a Protein kinase domain; the sequence is FQKVEKIGEG…AKTALAHPYF (283 aa). Residues 10–18 and K33 contribute to the ATP site; that span reads IGEGTYGVV. D127 serves as the catalytic Proton acceptor.

The protein belongs to the protein kinase superfamily. CMGC Ser/Thr protein kinase family. CDC2/CDKX subfamily. In terms of assembly, interacts with CABLES1 and CABLES2. Interacts with ATF1. Binding to CCNC/cyclin-C promotes RB1 phosphorylation. In terms of tissue distribution, expressed in cancer cell lines and glioblastoma tissue.

The enzyme catalyses L-seryl-[protein] + ATP = O-phospho-L-seryl-[protein] + ADP + H(+). The catalysed reaction is L-threonyl-[protein] + ATP = O-phospho-L-threonyl-[protein] + ADP + H(+). In terms of biological role, serine/threonine-protein kinase that plays a critical role in the control of the eukaryotic cell cycle; involved in G0-G1 and G1-S cell cycle transitions. Interacts with CCNC/cyclin-C during interphase. Phosphorylates histone H1, ATF1, RB1 and CABLES1. ATF1 phosphorylation triggers ATF1 transactivation and transcriptional activities, and promotes cell proliferation and transformation. CDK3/cyclin-C mediated RB1 phosphorylation is required for G0-G1 transition. Promotes G1-S transition probably by contributing to the activation of E2F1, E2F2 and E2F3 in a RB1-independent manner. The polypeptide is Cyclin-dependent kinase 3 (CDK3) (Homo sapiens (Human)).